A 312-amino-acid polypeptide reads, in one-letter code: 4-diphosphocytidyl-2-C-methyl-D-erythritol kinase (312 aa).

Residue Lys-16 is part of the active site. 101–111 is a binding site for ATP; it reads PIGAGLAGGSS. Residue Asp-143 is part of the active site.

This sequence belongs to the GHMP kinase family. IspE subfamily.

The catalysed reaction is 4-CDP-2-C-methyl-D-erythritol + ATP = 4-CDP-2-C-methyl-D-erythritol 2-phosphate + ADP + H(+). It participates in isoprenoid biosynthesis; isopentenyl diphosphate biosynthesis via DXP pathway; isopentenyl diphosphate from 1-deoxy-D-xylulose 5-phosphate: step 3/6. In terms of biological role, catalyzes the phosphorylation of the position 2 hydroxy group of 4-diphosphocytidyl-2C-methyl-D-erythritol. This is 4-diphosphocytidyl-2-C-methyl-D-erythritol kinase from Prochlorococcus marinus subsp. pastoris (strain CCMP1986 / NIES-2087 / MED4).